A 247-amino-acid polypeptide reads, in one-letter code: Complement C1q subcomponent subunit B (247 aa).

A signal peptide spans 1-22 (MKTPRGSVLVLLLLNLLRVSWA). The residue at position 23 (Q23) is a Pyrrolidone carboxylic acid. 4-hydroxyproline occurs at positions 29, 32, 35, 47, and 50. The tract at residues 30–78 (SIPGIPGIPGKPGSDGKPGTPGTKGEKGLPGLVSHLNENGEKGDPGFPG) is disordered. One can recognise a Collagen-like domain in the interval 39–98 (GKPGSDGKPGTPGTKGEKGLPGLVSHLNENGEKGDPGFPGMPGKVGPKGPIGPKGVPGPP). Residues 40–52 (KPGSDGKPGTPGT) show a composition bias toward low complexity. K53 and K56 each carry 5-hydroxylysine. P59 bears the 4-hydroxyproline mark. K71 carries the post-translational modification 5-hydroxylysine. 4-hydroxyproline occurs at positions 77 and 80. 2 positions are modified to 5-hydroxylysine: K86 and K92. A 4-hydroxyproline mark is found at P95 and P98. Residue K104 is modified to 5-hydroxylysine. One can recognise a C1q domain in the interval 111–247 (KATQKIAFSA…GFMLFPDTEA (137 aa)). Cysteines 175 and 192 form a disulfide. D193, Y194, and Q200 together coordinate Ca(2+).

In terms of assembly, core component of the complement C1 complex, a calcium-dependent complex composed of 1 molecule of the C1Q subcomplex, 2 molecules of C1R and 2 molecules of C1S. The C1Q subcomplex is composed 18 subunits: 3 chains of C1QA, C1QB, and C1QC trimerize to form 6 collagen-like triple helices connected to six globular ligand-recognition modules (C1q domain). Hydroxylated on lysine and proline residues. Hydroxylated lysine residues can be glycosylated. Bovine C1Q contains up to 66.3 hydroxylysine-galactosylglucose residues. Total percentage hydroxylysine residues glycosylated is 92.0%. Contains no hydroxylysine-monosaccharides.

It localises to the secreted. The protein localises to the cell surface. With respect to regulation, the C1Q subcomplex is inhibited by sulfated molecules, such as triterpenoid sulfates, heparan sulfate, or chondroitin sulfates. Functionally, core component of the complement C1 complex, a multiprotein complex that initiates the classical pathway of the complement system, a cascade of proteins that leads to phagocytosis and breakdown of pathogens and signaling that strengthens the adaptive immune system. The classical complement pathway is initiated by the C1Q subcomplex of the C1 complex, which specifically binds IgG or IgM immunoglobulins complexed with antigens, forming antigen-antibody complexes on the surface of pathogens: C1QA, together with C1QB and C1QC, specifically recognizes and binds the Fc regions of IgG or IgM via its C1q domain. Immunoglobulin-binding activates the proenzyme C1R, which cleaves C1S, initiating the proteolytic cascade of the complement system. The C1Q subcomplex is activated by a hexamer of IgG complexed with antigens, while it is activated by a pentameric IgM. The C1Q subcomplex also recognizes and binds phosphatidylserine exposed on the surface of cells undergoing programmed cell death, possibly promoting activation of the complement system. The protein is Complement C1q subcomponent subunit B (C1QB) of Bos taurus (Bovine).